Here is a 450-residue protein sequence, read N- to C-terminus: Saccharopine dehydrogenase [NADP(+), L-glutamate-forming] (450 aa).

NADP(+) is bound by residues serine 9–valine 12, cysteine 32–threonine 34, aspartate 54–valine 55, isoleucine 75, threonine 97–serine 98, valine 124–proline 126, and serine 174. L-saccharopine is bound by residues serine 98–tyrosine 99 and aspartate 125. L-saccharopine contacts are provided by residues arginine 223 and threonine 244–arginine 246.

The protein belongs to the saccharopine dehydrogenase family. As to quaternary structure, homodimer.

The protein resides in the cytoplasm. The enzyme catalyses L-saccharopine + NADP(+) + H2O = (S)-2-amino-6-oxohexanoate + L-glutamate + NADPH + H(+). It functions in the pathway amino-acid biosynthesis; L-lysine biosynthesis via AAA pathway; L-lysine from L-alpha-aminoadipate (fungal route): step 2/3. This is Saccharopine dehydrogenase [NADP(+), L-glutamate-forming] from Schizosaccharomyces pombe (strain 972 / ATCC 24843) (Fission yeast).